Consider the following 290-residue polypeptide: tRNA (guanine-N(7)-)-methyltransferase (290 aa).

Basic and acidic residues-rich tracts occupy residues 1–12 and 20–43; these read MSDSLHTPEEPR and AHAHDGSLRHTRAKGEPRFPDGPK. Residues 1–49 form a disordered region; that stretch reads MSDSLHTPEEPRPGPGEQLAHAHDGSLRHTRAKGEPRFPDGPKADPAGS. Residues Glu104, Asp129, Asp156, and Asp179 each coordinate S-adenosyl-L-methionine. Asp179 is an active-site residue. Residues Lys183, Asp215, and 252–255 contribute to the substrate site; that span reads TRFE.

It belongs to the class I-like SAM-binding methyltransferase superfamily. TrmB family.

It carries out the reaction guanosine(46) in tRNA + S-adenosyl-L-methionine = N(7)-methylguanosine(46) in tRNA + S-adenosyl-L-homocysteine. Its pathway is tRNA modification; N(7)-methylguanine-tRNA biosynthesis. Its function is as follows. Catalyzes the formation of N(7)-methylguanine at position 46 (m7G46) in tRNA. This is tRNA (guanine-N(7)-)-methyltransferase from Streptomyces avermitilis (strain ATCC 31267 / DSM 46492 / JCM 5070 / NBRC 14893 / NCIMB 12804 / NRRL 8165 / MA-4680).